Reading from the N-terminus, the 100-residue chain is Small ribosomal subunit protein uS14c (100 aa).

Belongs to the universal ribosomal protein uS14 family. In terms of assembly, part of the 30S ribosomal subunit.

Its subcellular location is the plastid. It localises to the chloroplast. Binds 16S rRNA, required for the assembly of 30S particles. The sequence is that of Small ribosomal subunit protein uS14c from Populus alba (White poplar).